A 1527-amino-acid polypeptide reads, in one-letter code: DNA-directed RNA polymerase subunit beta'' (1527 aa).

Residues C220, C296, C303, and C306 each contribute to the Zn(2+) site. Composition is skewed to basic and acidic residues over residues 644–661 (RTQE…RTRE) and 671–681 (PENKYRTREGE). Disordered regions lie at residues 644–681 (RTQE…REGE) and 712–793 (YRTL…KKEG). Composition is skewed to acidic residues over residues 737 to 755 (GEYE…SSED) and 763 to 786 (TLEE…PEED).

This sequence belongs to the RNA polymerase beta' chain family. RpoC2 subfamily. In terms of assembly, in plastids the minimal PEP RNA polymerase catalytic core is composed of four subunits: alpha, beta, beta', and beta''. When a (nuclear-encoded) sigma factor is associated with the core the holoenzyme is formed, which can initiate transcription. Zn(2+) serves as cofactor.

The protein localises to the plastid. It is found in the chloroplast. The enzyme catalyses RNA(n) + a ribonucleoside 5'-triphosphate = RNA(n+1) + diphosphate. DNA-dependent RNA polymerase catalyzes the transcription of DNA into RNA using the four ribonucleoside triphosphates as substrates. In Zea mays (Maize), this protein is DNA-directed RNA polymerase subunit beta''.